Here is a 254-residue protein sequence, read N- to C-terminus: Keratin-associated protein 24-1 (254 aa).

6 tandem repeats follow at residues 193–202, 203–212, 213–222, 223–232, 233–242, and 243–252. The 6 X 10 AA repeats of Y-[ILR]-[SVPC]-[NRTS]-[SNTG]-X-[QHRP]-[PSY]-[QSL]-[SRK] stretch occupies residues 193-252; it reads YISNSCQPQSYLVRNYHYSSYRPTSCRPLSYLSRSFRSLSYIPSTFPPLRYLCSGSRPLK.

It belongs to the PMG family. Interacts with hair keratins. In terms of tissue distribution, specific expression in the middle/upper hair cuticle.

In terms of biological role, in the hair cortex, hair keratin intermediate filaments are embedded in an interfilamentous matrix, consisting of hair keratin-associated proteins (KRTAP), which are essential for the formation of a rigid and resistant hair shaft through their extensive disulfide bond cross-linking with abundant cysteine residues of hair keratins. The matrix proteins include the high-sulfur and high-glycine-tyrosine keratins. This is Keratin-associated protein 24-1 (KRTAP24-1) from Homo sapiens (Human).